A 573-amino-acid chain; its full sequence is Sulfate adenylyltransferase (573 aa).

Residues 1–169 (MANPPHGGIL…VEAVNKLNHY (169 aa)) form an N-terminal region. The tract at residues 170 to 394 (DYVGLRFTPA…LRESNPPRSK (225 aa)) is catalytic. Gln197 lines the sulfate pocket. ATP-binding positions include 197–200 (QTRN) and 291–294 (GRDH). Active-site residues include Thr198, Arg199, and Asn200. Arg199 is a binding site for sulfate. A sulfate-binding site is contributed by Ala295. Leu333 contacts ATP. Residues 395-573 (QGFTVFLTGY…LESQGFLEKA (179 aa)) are allosteric regulation domain; adenylyl-sulfate kinase-like. 3'-phosphoadenylyl sulfate contacts are provided by residues 434-437 (DTVR), Arg451, 477-478 (IA), and Arg515.

The protein in the N-terminal section; belongs to the sulfate adenylyltransferase family. This sequence in the C-terminal section; belongs to the APS kinase family. As to quaternary structure, homohexamer. Dimer of trimers.

It is found in the cytoplasm. The catalysed reaction is sulfate + ATP + H(+) = adenosine 5'-phosphosulfate + diphosphate. The protein operates within sulfur metabolism; hydrogen sulfide biosynthesis; sulfite from sulfate: step 1/3. With respect to regulation, allosterically inhibited by 3'-phosphoadenosine 5'-phosphosulfate (PAPS). Catalyzes the first intracellular reaction of sulfate assimilation, forming adenosine-5'-phosphosulfate (APS) from inorganic sulfate and ATP. Plays an important role in sulfate activation as a component of the biosynthesis pathway of sulfur-containing amino acids. This Coccidioides immitis (strain RS) (Valley fever fungus) protein is Sulfate adenylyltransferase.